Consider the following 219-residue polypeptide: Peptide methionine sulfoxide reductase MsrA (219 aa).

Cys58 is an active-site residue.

It belongs to the MsrA Met sulfoxide reductase family.

The enzyme catalyses L-methionyl-[protein] + [thioredoxin]-disulfide + H2O = L-methionyl-(S)-S-oxide-[protein] + [thioredoxin]-dithiol. It carries out the reaction [thioredoxin]-disulfide + L-methionine + H2O = L-methionine (S)-S-oxide + [thioredoxin]-dithiol. Has an important function as a repair enzyme for proteins that have been inactivated by oxidation. Catalyzes the reversible oxidation-reduction of methionine sulfoxide in proteins to methionine. This Ectopseudomonas mendocina (strain ymp) (Pseudomonas mendocina) protein is Peptide methionine sulfoxide reductase MsrA.